Consider the following 216-residue polypeptide: Protein Syd (216 aa).

Belongs to the Syd family.

Its subcellular location is the cell inner membrane. Functionally, interacts with the SecY protein in vivo. May bind preferentially to an uncomplexed state of SecY, thus functioning either as a chelating agent for excess SecY in the cell or as a regulatory factor that negatively controls the translocase function. This is Protein Syd from Shewanella sp. (strain MR-4).